The sequence spans 245 residues: 8-amino-3,8-dideoxy-manno-octulosonate cytidylyltransferase (245 aa).

It belongs to the KdsB family.

The protein localises to the cytoplasm. It catalyses the reaction 8-amino-3,8-dideoxy-alpha-D-manno-octulosonate + CTP = CMP-8-amino-3,8-dideoxy-alpha-D-manno-oct-2-ulosonate + diphosphate. It participates in bacterial outer membrane biogenesis; lipopolysaccharide biosynthesis. In terms of biological role, activates KDO8N (a required 8-carbon sugar) for incorporation into bacterial lipopolysaccharide in the Shewanella genus. This chain is 8-amino-3,8-dideoxy-manno-octulosonate cytidylyltransferase, found in Shewanella sp. (strain MR-7).